The following is a 78-amino-acid chain: Large ribosomal subunit protein uL29 (78 aa).

A disordered region spans residues 59–78; it reads VESERKRGKSLSSTQTQKEE. Positions 68-78 are enriched in polar residues; it reads SLSSTQTQKEE.

This sequence belongs to the universal ribosomal protein uL29 family.

The polypeptide is Large ribosomal subunit protein uL29 (Synechococcus sp. (strain JA-3-3Ab) (Cyanobacteria bacterium Yellowstone A-Prime)).